The following is a 361-amino-acid chain: Probable cadicidin biosynthesis thioesterase (361 aa).

A 4Fe-4S ferredoxin-type domain is found at 2–29 (RVTVDSEQCVGAGQCVLNAPEVFDQDDD). The disordered stretch occupies residues 36–110 (RADPTSGTTR…RRDSPVTTAD (75 aa)). Residues 46–61 (RSARRATCARRPRSSS) show a composition bias toward basic residues. Basic and acidic residues-rich tracts occupy residues 62 to 74 (RRTEPAGCADRHR) and 94 to 104 (TDRRQNHRRDS). Residue Ser201 is part of the active site.

This sequence belongs to the thioesterase family.

Its pathway is antibiotic biosynthesis; candicidin biosynthesis. In terms of biological role, probable thioesterase involved in the biosynthesis of candicidin. Could release the macrolide ring from the polyketide synthase. In Streptomyces griseus, this protein is Probable cadicidin biosynthesis thioesterase.